The chain runs to 256 residues: Chlorophyll a-b binding protein CP24 10A, chloroplastic (256 aa).

2 consecutive transmembrane segments (helical) span residues Trp106–Phe126 and Ala134–Val154.

The protein belongs to the ELIP/psbS family.

The protein localises to the plastid. It localises to the chloroplast thylakoid membrane. This is Chlorophyll a-b binding protein CP24 10A, chloroplastic (CAP10A) from Solanum lycopersicum (Tomato).